Here is an 874-residue protein sequence, read N- to C-terminus: Alanine--tRNA ligase (874 aa).

The Zn(2+) site is built by H564, H568, C665, and H669.

The protein belongs to the class-II aminoacyl-tRNA synthetase family. It depends on Zn(2+) as a cofactor.

The protein localises to the cytoplasm. It catalyses the reaction tRNA(Ala) + L-alanine + ATP = L-alanyl-tRNA(Ala) + AMP + diphosphate. Catalyzes the attachment of alanine to tRNA(Ala) in a two-step reaction: alanine is first activated by ATP to form Ala-AMP and then transferred to the acceptor end of tRNA(Ala). Also edits incorrectly charged Ser-tRNA(Ala) and Gly-tRNA(Ala) via its editing domain. This is Alanine--tRNA ligase from Burkholderia pseudomallei (strain 668).